Reading from the N-terminus, the 262-residue chain is MIKWPWKTHQPQAETLAQWQDALAIPLLSPLDEREQQRLIVVAGQILQQKSIVPLQGLVLTSQMQARIALLFALPVLELGAECLDGFNEILLYPSPFVVEDEWQDDFGLVHSGPVVQSGQSWEQGPIVLNWQDVQDSFDLSGFNLVIHEAVHKLDMRNGGSATGIPPIPLRDIAAWEHDLHAAMENLQDEIDMVGEEAASMDAYAATDPAECFAVLSEYFFSAPELLANRFPVMYQHFSRFYKQDPLARLQRLQAENSAEVP.

Zn(2+)-binding residues include His-111, His-148, His-152, and Glu-211.

It belongs to the MtfA family. As to quaternary structure, interacts with Mlc. Requires Zn(2+) as cofactor.

Its subcellular location is the cytoplasm. Functionally, involved in the modulation of the activity of the glucose-phosphotransferase system (glucose-PTS). Interacts with the transcriptional repressor Mlc, preventing its interaction with DNA and leading to the modulation of expression of genes regulated by Mlc, including ptsG, which encodes the PTS system glucose-specific EIICB component. Its function is as follows. Shows zinc-dependent metallopeptidase activity. In Serratia proteamaculans (strain 568), this protein is Mlc titration factor A.